A 356-amino-acid chain; its full sequence is S-adenosylmethionine:tRNA ribosyltransferase-isomerase (356 aa).

The protein belongs to the QueA family. As to quaternary structure, monomer.

The protein localises to the cytoplasm. The catalysed reaction is 7-aminomethyl-7-carbaguanosine(34) in tRNA + S-adenosyl-L-methionine = epoxyqueuosine(34) in tRNA + adenine + L-methionine + 2 H(+). The protein operates within tRNA modification; tRNA-queuosine biosynthesis. In terms of biological role, transfers and isomerizes the ribose moiety from AdoMet to the 7-aminomethyl group of 7-deazaguanine (preQ1-tRNA) to give epoxyqueuosine (oQ-tRNA). The sequence is that of S-adenosylmethionine:tRNA ribosyltransferase-isomerase from Xanthomonas oryzae pv. oryzae (strain KACC10331 / KXO85).